Consider the following 129-residue polypeptide: MAKAPIRARKRVRKQVSDGVAHIHASFNNTIVTITDRQGNALGWATAGGSGFRGSRKSTPFAAQVAAERCADAVKEYGIKNLEVMVKGPGPGRESTIRALNAAGFRITNITDVTPIPHNGCRPPKKRRV.

The protein belongs to the universal ribosomal protein uS11 family. In terms of assembly, part of the 30S ribosomal subunit. Interacts with proteins S7 and S18. Binds to IF-3.

Functionally, located on the platform of the 30S subunit, it bridges several disparate RNA helices of the 16S rRNA. Forms part of the Shine-Dalgarno cleft in the 70S ribosome. This chain is Small ribosomal subunit protein uS11, found in Escherichia fergusonii (strain ATCC 35469 / DSM 13698 / CCUG 18766 / IAM 14443 / JCM 21226 / LMG 7866 / NBRC 102419 / NCTC 12128 / CDC 0568-73).